The sequence spans 203 residues: Dual specificity phosphatase 29 (203 aa).

One can recognise a Tyrosine-protein phosphatase domain in the interval 47–193; that stretch reads HVNQVWPRIY…LRALDIALQE (147 aa). A substrate-binding site is contributed by 137–144; that stretch reads HCVMGRSR. Cysteine 138 functions as the Phosphocysteine intermediate in the catalytic mechanism.

Belongs to the protein-tyrosine phosphatase family. Non-receptor class dual specificity subfamily.

Its subcellular location is the cytoplasm. The protein localises to the nucleus. It catalyses the reaction O-phospho-L-tyrosyl-[protein] + H2O = L-tyrosyl-[protein] + phosphate. It carries out the reaction O-phospho-L-seryl-[protein] + H2O = L-seryl-[protein] + phosphate. The catalysed reaction is O-phospho-L-threonyl-[protein] + H2O = L-threonyl-[protein] + phosphate. In terms of biological role, dual specificity phosphatase able to dephosphorylate phosphotyrosine, phosphoserine and phosphothreonine residues within the same substrate, with a preference for phosphotyrosine as a substrate. Involved in the modulation of AMPK and MAPK1/2 signaling pathways. This Oryzias latipes (Japanese rice fish) protein is Dual specificity phosphatase 29 (dusp29).